A 108-amino-acid polypeptide reads, in one-letter code: MPLWVFFFVILTLSNSSHCSPPPPLTLRMRRYADAIFTNSYRKVLGQLSARKLLQDIMSRQQGESNQERGARARLGRQVDSMWAEQKQMELESILVALLQKHSRNSQG.

An N-terminal signal peptide occupies residues 1–20; that stretch reads MPLWVFFFVILTLSNSSHCS. Positions 21 to 31 are excised as a propeptide; it reads PPPPLTLRMRR. At Leu-75 the chain carries Leucine amide. The propeptide occupies 78–108; the sequence is QVDSMWAEQKQMELESILVALLQKHSRNSQG.

It belongs to the glucagon family.

Its subcellular location is the secreted. In terms of biological role, GRF is released by the hypothalamus and acts on the adenohypophyse to stimulate the secretion of growth hormone. The sequence is that of Somatoliberin (GHRH) from Homo sapiens (Human).